Consider the following 259-residue polypeptide: UPF0758 protein Bphyt_3148 (259 aa).

The region spanning 137 to 259 (LLNSPEAVEN…VYSFARAGWP (123 aa)) is the MPN domain. Positions 208, 210, and 221 each coordinate Zn(2+). The short motif at 208–221 (HNHPSGAVQPSASD) is the JAMM motif element.

This sequence belongs to the UPF0758 family.

The protein is UPF0758 protein Bphyt_3148 of Paraburkholderia phytofirmans (strain DSM 17436 / LMG 22146 / PsJN) (Burkholderia phytofirmans).